The chain runs to 205 residues: Urease accessory protein UreG (205 aa).

14 to 21 (GPVGSGKT) is a binding site for GTP.

This sequence belongs to the SIMIBI class G3E GTPase family. UreG subfamily. In terms of assembly, homodimer. UreD, UreF and UreG form a complex that acts as a GTP-hydrolysis-dependent molecular chaperone, activating the urease apoprotein by helping to assemble the nickel containing metallocenter of UreC. The UreE protein probably delivers the nickel.

It localises to the cytoplasm. Its function is as follows. Facilitates the functional incorporation of the urease nickel metallocenter. This process requires GTP hydrolysis, probably effectuated by UreG. In Citrobacter koseri (strain ATCC BAA-895 / CDC 4225-83 / SGSC4696), this protein is Urease accessory protein UreG.